We begin with the raw amino-acid sequence, 76 residues long: Exodeoxyribonuclease 7 small subunit (76 aa).

It belongs to the XseB family. As to quaternary structure, heterooligomer composed of large and small subunits.

Its subcellular location is the cytoplasm. The catalysed reaction is Exonucleolytic cleavage in either 5'- to 3'- or 3'- to 5'-direction to yield nucleoside 5'-phosphates.. Bidirectionally degrades single-stranded DNA into large acid-insoluble oligonucleotides, which are then degraded further into small acid-soluble oligonucleotides. This Geotalea daltonii (strain DSM 22248 / JCM 15807 / FRC-32) (Geobacter daltonii) protein is Exodeoxyribonuclease 7 small subunit.